We begin with the raw amino-acid sequence, 95 residues long: Aspartyl/glutamyl-tRNA(Asn/Gln) amidotransferase subunit C (95 aa).

It belongs to the GatC family. As to quaternary structure, heterotrimer of A, B and C subunits.

The enzyme catalyses L-glutamyl-tRNA(Gln) + L-glutamine + ATP + H2O = L-glutaminyl-tRNA(Gln) + L-glutamate + ADP + phosphate + H(+). It carries out the reaction L-aspartyl-tRNA(Asn) + L-glutamine + ATP + H2O = L-asparaginyl-tRNA(Asn) + L-glutamate + ADP + phosphate + 2 H(+). Allows the formation of correctly charged Asn-tRNA(Asn) or Gln-tRNA(Gln) through the transamidation of misacylated Asp-tRNA(Asn) or Glu-tRNA(Gln) in organisms which lack either or both of asparaginyl-tRNA or glutaminyl-tRNA synthetases. The reaction takes place in the presence of glutamine and ATP through an activated phospho-Asp-tRNA(Asn) or phospho-Glu-tRNA(Gln). The chain is Aspartyl/glutamyl-tRNA(Asn/Gln) amidotransferase subunit C from Ruegeria sp. (strain TM1040) (Silicibacter sp.).